The sequence spans 150 residues: Macrodomain Ter protein (150 aa).

It belongs to the MatP family. In terms of assembly, homodimer.

Its subcellular location is the cytoplasm. Functionally, required for spatial organization of the terminus region of the chromosome (Ter macrodomain) during the cell cycle. Prevents early segregation of duplicated Ter macrodomains during cell division. Binds specifically to matS, which is a 13 bp signature motif repeated within the Ter macrodomain. The chain is Macrodomain Ter protein from Escherichia coli O6:K15:H31 (strain 536 / UPEC).